Here is a 276-residue protein sequence, read N- to C-terminus: Probable endonuclease 4 (276 aa).

9 residues coordinate Zn(2+): H65, H105, E141, D175, H178, H210, D223, H225, and E255.

It belongs to the AP endonuclease 2 family. Zn(2+) serves as cofactor.

It catalyses the reaction Endonucleolytic cleavage to 5'-phosphooligonucleotide end-products.. Endonuclease IV plays a role in DNA repair. It cleaves phosphodiester bonds at apurinic or apyrimidinic (AP) sites, generating a 3'-hydroxyl group and a 5'-terminal sugar phosphate. The chain is Probable endonuclease 4 from Symbiobacterium thermophilum (strain DSM 24528 / JCM 14929 / IAM 14863 / T).